Here is a 41-residue protein sequence, read N- to C-terminus: Ranatuerin-2PLg (41 aa).

Positions 1-11 (DDGVEMTEEEV) are excised as a propeptide. A disulfide bond links C36 and C41.

The protein belongs to the frog skin active peptide (FSAP) family. Ranatuerin subfamily.

Its subcellular location is the secreted. Functionally, antimicrobial peptide. The chain is Ranatuerin-2PLg from Lithobates palustris (Pickerel frog).